The following is a 597-amino-acid chain: Histidine protein kinase DivJ (597 aa).

A run of 6 helical transmembrane segments spans residues 40–57 (LGWLAAVCLAAAAALFTA), 62–81 (WPVWAALGAGALPALVSLIF), 91–109 (WLLVLWAVGGSLAAVLTGG), 110–125 (VGGAMAAWCLAPVAAA), 137–158 (GAALALIGACVAALTQLSGLAP), and 159–188 (AAPTGPLAFVLGFLALVTTGLGLAAGLLIG). The 219-residue stretch at 335–553 (NMSHELRTPL…TVSVRLPVLL (219 aa)) folds into the Histidine kinase domain. His-338 is subject to Phosphohistidine; by autocatalysis. Positions 561 to 585 (PTPPAAPEAPSAPEPAPTVEEPPPA) are enriched in pro residues. A disordered region spans residues 561 to 597 (PTPPAAPEAPSAPEPAPTVEEPPPASLGDNVIAFAPR).

The protein localises to the cell membrane. The enzyme catalyses ATP + protein L-histidine = ADP + protein N-phospho-L-histidine.. In terms of biological role, kinase required for the regulation of cell division and differentiation. Is part of a signal transduction pathway, activating PleD by phosphorylation. The chain is Histidine protein kinase DivJ (divJ) from Caulobacter vibrioides (strain ATCC 19089 / CIP 103742 / CB 15) (Caulobacter crescentus).